The sequence spans 117 residues: Large ribosomal subunit protein uL18 (117 aa).

The protein belongs to the universal ribosomal protein uL18 family. As to quaternary structure, part of the 50S ribosomal subunit; part of the 5S rRNA/L5/L18/L25 subcomplex. Contacts the 5S and 23S rRNAs.

Functionally, this is one of the proteins that bind and probably mediate the attachment of the 5S RNA into the large ribosomal subunit, where it forms part of the central protuberance. The polypeptide is Large ribosomal subunit protein uL18 (Aliivibrio fischeri (strain ATCC 700601 / ES114) (Vibrio fischeri)).